The following is a 517-amino-acid chain: Maturase K (517 aa).

Belongs to the intron maturase 2 family. MatK subfamily.

The protein resides in the plastid. The protein localises to the chloroplast. In terms of biological role, usually encoded in the trnK tRNA gene intron. Probably assists in splicing its own and other chloroplast group II introns. The polypeptide is Maturase K (Juncus effusus (Soft rush)).